The sequence spans 134 residues: NADH-quinone oxidoreductase subunit A (134 aa).

3 consecutive transmembrane segments (helical) span residues 12-32, 64-84, and 93-113; these read FAIYVIAAICLCLVMIGLAAL, FYLVAMFFVIFDVEALYLFAW, and WVGFIEAAIFIGLLLVGLLYL.

The protein belongs to the complex I subunit 3 family. NDH-1 is composed of 14 different subunits. Subunits NuoA, H, J, K, L, M, N constitute the membrane sector of the complex.

It is found in the cell inner membrane. The enzyme catalyses a quinone + NADH + 5 H(+)(in) = a quinol + NAD(+) + 4 H(+)(out). In terms of biological role, NDH-1 shuttles electrons from NADH, via FMN and iron-sulfur (Fe-S) centers, to quinones in the respiratory chain. The immediate electron acceptor for the enzyme in this species is believed to be ubiquinone. Couples the redox reaction to proton translocation (for every two electrons transferred, four hydrogen ions are translocated across the cytoplasmic membrane), and thus conserves the redox energy in a proton gradient. In Aeromonas salmonicida (strain A449), this protein is NADH-quinone oxidoreductase subunit A.